Reading from the N-terminus, the 244-residue chain is UDP-2,3-diacylglucosamine hydrolase (244 aa).

Residues Asp-8, His-10, Asp-41, Asn-79, and His-114 each contribute to the Mn(2+) site. Position 79-80 (79-80 (NR)) interacts with substrate. Residues Asp-122, Lys-164, Lys-167, and His-195 each contribute to the substrate site. 2 residues coordinate Mn(2+): His-195 and His-197.

It belongs to the LpxH family. It depends on Mn(2+) as a cofactor.

It localises to the cell inner membrane. The catalysed reaction is UDP-2-N,3-O-bis[(3R)-3-hydroxytetradecanoyl]-alpha-D-glucosamine + H2O = 2-N,3-O-bis[(3R)-3-hydroxytetradecanoyl]-alpha-D-glucosaminyl 1-phosphate + UMP + 2 H(+). It participates in glycolipid biosynthesis; lipid IV(A) biosynthesis; lipid IV(A) from (3R)-3-hydroxytetradecanoyl-[acyl-carrier-protein] and UDP-N-acetyl-alpha-D-glucosamine: step 4/6. Its function is as follows. Hydrolyzes the pyrophosphate bond of UDP-2,3-diacylglucosamine to yield 2,3-diacylglucosamine 1-phosphate (lipid X) and UMP by catalyzing the attack of water at the alpha-P atom. Involved in the biosynthesis of lipid A, a phosphorylated glycolipid that anchors the lipopolysaccharide to the outer membrane of the cell. The polypeptide is UDP-2,3-diacylglucosamine hydrolase (Vibrio atlanticus (strain LGP32) (Vibrio splendidus (strain Mel32))).